Reading from the N-terminus, the 364-residue chain is Tyrosyl-DNA phosphodiesterase 2 (364 aa).

Methionine 1 bears the N-acetylmethionine mark. Positions methionine 1–glycine 10 are enriched in low complexity. The segment at methionine 1–glutamate 21 is disordered. Lysine 23 is covalently cross-linked (Glycyl lysine isopeptide (Lys-Gly) (interchain with G-Cter in SUMO2)). Residues glutamate 68 to valine 108 form a disordered region. Phosphothreonine; by ACVR1B is present on residues threonine 88 and threonine 92. Position 95 is a phosphoserine (serine 95). The tract at residues asparagine 122–leucine 126 is interaction with 5' end of substrate DNA. Residues aspartate 124 and glutamate 154 each contribute to the Mg(2+) site. The interaction with 5' end of substrate DNA stretch occupies residues histidine 228–arginine 233. The active-site Proton donor/acceptor is aspartate 264. The interval asparagine 266–arginine 268 is interaction with 5' end of substrate DNA.

The protein belongs to the CCR4/nocturin family. Interacts with TRAF2, TRAF3, TRAF5, TRAF6, TNFRSF8/CD30, TNFRSF5/CD40, TNFRSF1B/TNF-R75, ETS1, ETS2, FLI1, SMAD3 and ACVR1B/ALK4. Requires Mg(2+) as cofactor. Mn(2+) serves as cofactor. Post-translationally, ubiquitinated by TRAF6.

Its subcellular location is the nucleus. It localises to the PML body. The protein resides in the nucleolus. It is found in the cytoplasm. In terms of biological role, DNA repair enzyme that can remove a variety of covalent adducts from DNA through hydrolysis of a 5'-phosphodiester bond, giving rise to DNA with a free 5' phosphate. Catalyzes the hydrolysis of dead-end complexes between DNA and the topoisomerase 2 (TOP2) active site tyrosine residue. The 5'-tyrosyl DNA phosphodiesterase activity can enable the repair of TOP2-induced DNA double-strand breaks/DSBs without the need for nuclease activity, creating a 'clean' DSB with 5'-phosphate termini that are ready for ligation. Thereby, protects the transcription of many genes involved in neurological development and maintenance from the abortive activity of TOP2. Hydrolyzes 5'-phosphoglycolates on protruding 5' ends on DSBs due to DNA damage by radiation and free radicals. Has preference for single-stranded DNA or duplex DNA with a 4 base pair overhang as substrate. Also has 3'-tyrosyl DNA phosphodiesterase activity, but less efficiently and much slower than TDP1. Constitutes the major if not only 5'-tyrosyl-DNA phosphodiesterase in cells. Also acts as an adapter by participating in the specific activation of MAP3K7/TAK1 in response to TGF-beta: associates with components of the TGF-beta receptor-TRAF6-TAK1 signaling module and promotes their ubiquitination dependent complex formation. Involved in non-canonical TGF-beta induced signaling routes. May also act as a negative regulator of ETS1 and may inhibit NF-kappa-B activation. Acts as a regulator of ribosome biogenesis following stress. This Bos taurus (Bovine) protein is Tyrosyl-DNA phosphodiesterase 2 (TDP2).